An 833-amino-acid chain; its full sequence is Multiple RNA-binding domain-containing protein 1 (833 aa).

In terms of domain architecture, RRM 1 spans 2–83 (SRIIIKNIPR…SRIEVHRALD (82 aa)). The tract at residues 160–251 (ENEEVFDTEI…DAQAPLSDDE (92 aa)) is disordered. 2 stretches are compositionally biased toward basic and acidic residues: residues 188–205 (AAKRHEGDSIKSTEHDST) and 213–222 (DGREKSSSEL). RRM domains lie at 323–401 (KRLF…PAKA), 506–578 (NVLL…KAPR), 619–702 (ATIY…LSHQ), and 721–798 (TKIL…YASN).

This sequence belongs to the RRM MRD1 family.

The protein localises to the nucleus. Involved in pre-rRNA processing. The protein is Multiple RNA-binding domain-containing protein 1 (mrd1) of Schizosaccharomyces pombe (strain 972 / ATCC 24843) (Fission yeast).